We begin with the raw amino-acid sequence, 143 residues long: Large ribosomal subunit protein uL16 (143 aa).

Residues 1 to 26 (MSMALLPRRVKYRKSQRGSRKGNATR) are disordered. Positions 8-20 (RRVKYRKSQRGSR) are enriched in basic residues.

It belongs to the universal ribosomal protein uL16 family. In terms of assembly, part of the 50S ribosomal subunit.

Binds 23S rRNA and is also seen to make contacts with the A and possibly P site tRNAs. The sequence is that of Large ribosomal subunit protein uL16 from Methylacidiphilum infernorum (isolate V4) (Methylokorus infernorum (strain V4)).